A 276-amino-acid polypeptide reads, in one-letter code: Large ribosomal subunit protein uL2 (276 aa).

A disordered region spans residues 224-276 (AMNPIDHPHGGGEGKTSGGRNPVTPWGVPTKGKKTRKRNKSSNKYIKRVSDKG). The segment covering 254-270 (KGKKTRKRNKSSNKYIK) has biased composition (basic residues).

It belongs to the universal ribosomal protein uL2 family. In terms of assembly, part of the 50S ribosomal subunit. Forms a bridge to the 30S subunit in the 70S ribosome.

In terms of biological role, one of the primary rRNA binding proteins. Required for association of the 30S and 50S subunits to form the 70S ribosome, for tRNA binding and peptide bond formation. It has been suggested to have peptidyltransferase activity; this is somewhat controversial. Makes several contacts with the 16S rRNA in the 70S ribosome. The chain is Large ribosomal subunit protein uL2 from Ehrlichia canis (strain Jake).